Here is a 515-residue protein sequence, read N- to C-terminus: Alpha-1B adrenergic receptor (515 aa).

Topologically, residues 1–45 (MNPDLDTGHNTSAPAQWGELKDANFTGPNQTSSNSTLPQLDVTRA) are extracellular. N-linked (GlcNAc...) asparagine glycans are attached at residues asparagine 10, asparagine 24, and asparagine 34. Residues 46–70 (ISVGLVLGAFILFAIVGNILVILSV) form a helical membrane-spanning segment. Residues 71–83 (ACNRHLRTPTNYF) are Cytoplasmic-facing. The chain crosses the membrane as a helical span at residues 84 to 105 (IVNLAIADLLLSFTVLPFSATL). Residues 106–115 (EVLGYWVLGR) lie on the Extracellular side of the membrane. The helical transmembrane segment at 116–141 (IFCDIWAAVDVLCCTASILSLCAISI) threads the bilayer. Cysteine 118 and cysteine 195 are disulfide-bonded. The Cytoplasmic portion of the chain corresponds to 142–161 (DRYIGVRYSLQYPTLVTRRK). A helical transmembrane segment spans residues 162–184 (AILALLSVWVLSTVISIGPLLGW). At 185 to 201 (KEPAPNDDKECGVTEEP) the chain is on the extracellular side. The helical transmembrane segment at 202–224 (FYALFSSLGSFYIPLAVILVMYC) threads the bilayer. The Cytoplasmic segment spans residues 225-295 (RVYIVAKRTT…FSREKKAAKT (71 aa)). Threonine 264 is subject to Phosphothreonine. The helical transmembrane segment at 296–319 (LGIVVGMFILCWLPFFIALPLGSL) threads the bilayer. At 320–326 (FSTLKPP) the chain is on the extracellular side. A helical transmembrane segment spans residues 327–351 (DAVFKVVFWLGYFNSCLNPIIYPCS). Residues 352-515 (SKEFKRAFMR…SNMPLAPGHF (164 aa)) lie on the Cytoplasmic side of the membrane. A lipid anchor (S-palmitoyl cysteine) is attached at cysteine 365. The short motif at 368-378 (RSGRRRRRRRR) is the Nuclear localization signal element. Disordered stretches follow at residues 392-428 (GGSLERSQSRKDSLDDSGSCMSGSQRTLPSASPSPGY) and 473-515 (LLGE…PGHF). Positions 410-424 (SCMSGSQRTLPSASP) are enriched in polar residues.

The protein belongs to the G-protein coupled receptor 1 family. Adrenergic receptor subfamily. ADRA1B sub-subfamily. In terms of assembly, homo- and heterooligomer. Heterooligomerizes with ADRA1B homooligomers in cardiac myocytes. Interacts with CAVIN4.

The protein localises to the nucleus membrane. It is found in the cell membrane. It localises to the cytoplasm. Its subcellular location is the membrane. The protein resides in the caveola. Functionally, this alpha-adrenergic receptor mediates its action by association with G proteins that activate a phosphatidylinositol-calcium second messenger system. Its effect is mediated by G(q) and G(11) proteins. Nuclear ADRA1A-ADRA1B heterooligomers regulate phenylephrine (PE)-stimulated ERK signaling in cardiac myocytes. This is Alpha-1B adrenergic receptor (ADRA1B) from Mesocricetus auratus (Golden hamster).